The primary structure comprises 107 residues: Putative double-stranded DNA mimic protein ETA_15890 (107 aa).

The protein belongs to the putative dsDNA mimic protein family.

May act as a double-stranded DNA (dsDNA) mimic. Probably regulates the activity of a dsDNA-binding protein. The protein is Putative double-stranded DNA mimic protein ETA_15890 of Erwinia tasmaniensis (strain DSM 17950 / CFBP 7177 / CIP 109463 / NCPPB 4357 / Et1/99).